A 399-amino-acid polypeptide reads, in one-letter code: Elongation factor Tu (399 aa).

Positions lysine 10 to glutamate 209 constitute a tr-type G domain. A G1 region spans residues glycine 19 to threonine 26. Glycine 19 to threonine 26 is a binding site for GTP. Threonine 26 is a Mg(2+) binding site. Residues glycine 60–asparagine 64 form a G2 region. The segment at aspartate 81–glycine 84 is G3. GTP is bound by residues aspartate 81–histidine 85 and asparagine 136–aspartate 139. The tract at residues asparagine 136–aspartate 139 is G4. Positions serine 174 to leucine 176 are G5.

This sequence belongs to the TRAFAC class translation factor GTPase superfamily. Classic translation factor GTPase family. EF-Tu/EF-1A subfamily. As to quaternary structure, monomer.

It localises to the cytoplasm. It carries out the reaction GTP + H2O = GDP + phosphate + H(+). Its function is as follows. GTP hydrolase that promotes the GTP-dependent binding of aminoacyl-tRNA to the A-site of ribosomes during protein biosynthesis. In Nautilia profundicola (strain ATCC BAA-1463 / DSM 18972 / AmH), this protein is Elongation factor Tu.